A 197-amino-acid chain; its full sequence is Pyridoxal 5'-phosphate synthase subunit PdxT (197 aa).

52–54 (GES) contributes to the L-glutamine binding site. Cys84 functions as the Nucleophile in the catalytic mechanism. L-glutamine is bound by residues Arg116 and 143 to 144 (IR). Active-site charge relay system residues include His179 and Glu181.

Belongs to the glutaminase PdxT/SNO family. In the presence of PdxS, forms a dodecamer of heterodimers. Only shows activity in the heterodimer.

The catalysed reaction is aldehydo-D-ribose 5-phosphate + D-glyceraldehyde 3-phosphate + L-glutamine = pyridoxal 5'-phosphate + L-glutamate + phosphate + 3 H2O + H(+). The enzyme catalyses L-glutamine + H2O = L-glutamate + NH4(+). It functions in the pathway cofactor biosynthesis; pyridoxal 5'-phosphate biosynthesis. Its function is as follows. Catalyzes the hydrolysis of glutamine to glutamate and ammonia as part of the biosynthesis of pyridoxal 5'-phosphate. The resulting ammonia molecule is channeled to the active site of PdxS. The sequence is that of Pyridoxal 5'-phosphate synthase subunit PdxT from Ignicoccus hospitalis (strain KIN4/I / DSM 18386 / JCM 14125).